Consider the following 497-residue polypeptide: Glycerol kinase (497 aa).

Thr-11 serves as a coordination point for ADP. Positions 11, 12, and 13 each coordinate ATP. Thr-11 is a binding site for sn-glycerol 3-phosphate. Position 15 (Arg-15) interacts with ADP. Positions 81, 82, 133, and 242 each coordinate sn-glycerol 3-phosphate. Positions 81, 82, 133, 242, and 243 each coordinate glycerol. Residues Thr-264 and Gly-307 each contribute to the ADP site. Residues Thr-264, Gly-307, Gln-311, and Gly-412 each contribute to the ATP site. ADP contacts are provided by Gly-412 and Asn-416.

This sequence belongs to the FGGY kinase family.

It carries out the reaction glycerol + ATP = sn-glycerol 3-phosphate + ADP + H(+). Its pathway is polyol metabolism; glycerol degradation via glycerol kinase pathway; sn-glycerol 3-phosphate from glycerol: step 1/1. Its activity is regulated as follows. Inhibited by fructose 1,6-bisphosphate (FBP). Functionally, key enzyme in the regulation of glycerol uptake and metabolism. Catalyzes the phosphorylation of glycerol to yield sn-glycerol 3-phosphate. The sequence is that of Glycerol kinase from Variovorax paradoxus (strain S110).